A 1191-amino-acid chain; its full sequence is Probable inositol polyphosphate 5-phosphatase C9G1.10c (1191 aa).

Polar residues-rich tracts occupy residues 1–10 (MASRQGFSNV), 72–101 (QVSS…NPSN), 114–135 (SDSS…SFVS), 151–161 (SFQSSVQSTKG), and 181–193 (NFSS…SPIS). The tract at residues 1–193 (MASRQGFSNV…SKAGSSSPIS (193 aa)) is disordered. The residue at position 195 (S195) is a Phosphoserine. Disordered stretches follow at residues 205-281 (SQSP…PQPV), 294-334 (SQQL…DASL), and 355-425 (IPEK…SSSS). The segment covering 268 to 280 (TPPPIPSPRPPQP) has biased composition (pro residues). The span at 302–311 (SPRKPPKPPL) shows a compositional bias: basic residues. 3 stretches are compositionally biased toward polar residues: residues 316–334 (TQRS…DASL), 367–382 (HTLS…SENL), and 400–413 (LATN…VSTE). Residues 414–425 (QSDPSVAASSSS) are compositionally biased toward low complexity.

It belongs to the inositol 1,4,5-trisphosphate 5-phosphatase family.

Its subcellular location is the cytoplasm. The sequence is that of Probable inositol polyphosphate 5-phosphatase C9G1.10c from Schizosaccharomyces pombe (strain 972 / ATCC 24843) (Fission yeast).